A 413-amino-acid chain; its full sequence is Na(+)-translocating NADH-quinone reductase subunit B (413 aa).

The next 3 membrane-spanning stretches (helical) occupy residues methionine 56 to glycine 76, leucine 123 to tryptophan 143, and isoleucine 169 to isoleucine 189. The residue at position 236 (threonine 236) is an FMN phosphoryl threonine. The next 5 helical transmembrane spans lie at glycine 270–glycine 290, isoleucine 297–serine 317, leucine 322–phenylalanine 342, tryptophan 358–tyrosine 378, and glycine 381–valine 401.

Belongs to the NqrB/RnfD family. Composed of six subunits; NqrA, NqrB, NqrC, NqrD, NqrE and NqrF. Requires FMN as cofactor.

It localises to the cell inner membrane. It carries out the reaction a ubiquinone + n Na(+)(in) + NADH + H(+) = a ubiquinol + n Na(+)(out) + NAD(+). NQR complex catalyzes the reduction of ubiquinone-1 to ubiquinol by two successive reactions, coupled with the transport of Na(+) ions from the cytoplasm to the periplasm. NqrA to NqrE are probably involved in the second step, the conversion of ubisemiquinone to ubiquinol. This chain is Na(+)-translocating NADH-quinone reductase subunit B, found in Yersinia pestis.